The following is a 170-amino-acid chain: Ribosome maturation factor RimM (170 aa).

Residues 96 to 169 (EGEFYACDVE…VVQLATLEGL (74 aa)) enclose the PRC barrel domain.

This sequence belongs to the RimM family. Binds ribosomal protein uS19.

Its subcellular location is the cytoplasm. In terms of biological role, an accessory protein needed during the final step in the assembly of 30S ribosomal subunit, possibly for assembly of the head region. Essential for efficient processing of 16S rRNA. May be needed both before and after RbfA during the maturation of 16S rRNA. It has affinity for free ribosomal 30S subunits but not for 70S ribosomes. The chain is Ribosome maturation factor RimM from Sorangium cellulosum (strain So ce56) (Polyangium cellulosum (strain So ce56)).